The sequence spans 284 residues: MDAIKKKMLMLKNDKENALDRAEQAEQAMKDAQEKNVKLEDEINDLNKKIRMVEDELDKAQESLKEATEQLEAATKKAADAEAEVASLNRRIQLVEEELDRAQERLNSTVEKLTDSEKAADESERARKVLENRQGADEDKMELLDMQLREAKMIAEEADRKYEEVARKLVITEGDLERAEERADLAETKARELEDELKTTTGQLKSMEAQATKASEKEEAYEEQVRDLSAKLKEAETRAEFAERTVAKLEKNVDDLEDALYAEKEKYRGVSEELDQALNELHNM.

Residues M1–M284 are a coiled coil. Disordered regions lie at residues L106 to Q134 and A186 to Y221. Composition is skewed to basic and acidic residues over residues K112 to Q134 and A186 to K198.

This sequence belongs to the tropomyosin family. As to quaternary structure, homodimer.

Tropomyosin, in association with the troponin complex, plays a central role in the calcium dependent regulation of muscle contraction. This is Tropomyosin (TPM) from Branchiostoma belcheri (Amphioxus).